We begin with the raw amino-acid sequence, 766 residues long: Leucine-rich repeat and fibronectin type III domain-containing protein 1 (766 aa).

The N-terminal stretch at 1-31 (MAPGPFSSGLFSPPPAALPFLLLLWAGASRG) is a signal peptide. The LRRNT domain maps to 32-65 (QPCPGRCICQNVAPTLTMLCAKTGLLFVPPAIDR). Over 32-536 (QPCPGRCICQ…LRAHFLGGTM (505 aa)) the chain is Extracellular. LRR repeat units follow at residues 66-87 (RVVE…DFAN), 90-111 (SLVH…AFAD), 114-135 (ALRA…QLRG), 138-159 (NLRH…AFDA), 163-184 (TVED…AVGQ), 187-208 (NLNT…TFVQ), and 211-232 (KLVR…GLFL). Residue Asn-87 is glycosylated (N-linked (GlcNAc...) asparagine). Positions 252 to 298 (NPLHCNCELLWLRRLTREDDLETCATPEHLTDRYFWSIPEEEFLCEP) constitute an LRRCT domain. One can recognise an Ig-like domain in the interval 299–386 (PLITRQAGGR…GEATAPVEVC (88 aa)). A disulfide bond links Cys-321 and Cys-370. A glycan (N-linked (GlcNAc...) asparagine) is linked at Asn-343. Positions 397 to 424 (PAAPPPLTEPGSSDIATPGRPGANDSTS) are disordered. One can recognise a Fibronectin type-III domain in the interval 424–520 (SERRLVAAEL…GCVQFTTAGD (97 aa)). A helical transmembrane segment spans residues 537–557 (IIAIGGVIVASVLVFIVLLMI). Topologically, residues 558–766 (RYKVYGDGDS…STEWMLESTV (209 aa)) are cytoplasmic. 2 disordered regions span residues 568-601 (RRIK…PPAP) and 645-742 (LCLL…GEDG). Ser-713 bears the Phosphoserine mark. Basic residues predominate over residues 714–727 (YPRRARRTKRHRST). The PDZ-binding motif lies at 763–766 (ESTV).

This sequence belongs to the LRFN family. As to quaternary structure, can form heteromeric complexes with LRFN2, LRFN3, LRFN4 and LRFN5. Forms homomeric complexes, but not across cell junctions. Interacts with DLG4. Also interacts with DLG1, DLG2, and DLG3. Interacts with 2 AMPA receptor subunits GRIA1 and GRIA2 and NMDA receptor subunit GRIN1. Post-translationally, glycosylated. Predominantly expressed in the brain, with a weak, but broad expression in the cerebral cortex and diencephalic nuclei. Also detected in other parts of the central nervous system, including the olfactory bulb, pons, cerebellum, and medulla oblongata, as well as in the peripheral nervous system, such as the ganglia of cranial nerves and the dorsal root ganglion during gestation.

The protein resides in the membrane. The protein localises to the synapse. Its subcellular location is the postsynaptic density membrane. In terms of biological role, promotes neurite outgrowth in hippocampal neurons. Involved in the regulation and maintenance of excitatory synapses. Induces the clustering of excitatory postsynaptic proteins, including DLG4, DLGAP1, GRIA1 and GRIN1. This Mus musculus (Mouse) protein is Leucine-rich repeat and fibronectin type III domain-containing protein 1 (Lrfn1).